The following is a 228-amino-acid chain: Ran-binding protein 1 homolog a (228 aa).

Basic and acidic residues predominate over residues 1–13 (MATNEPEHEHRDE). 2 disordered regions span residues 1–30 (MATN…QVAP) and 159–228 (SEEE…GPST). A compositionally biased stretch (acidic residues) spans 14-24 (EEAGANEDEDT). A RanBD1 domain is found at 27-162 (QVAPIVRLEE…FKEVAESEEE (136 aa)). Over residues 179 to 228 (LTVEETKTEEKTEAKAVETAKTEVKAEEKKESEAEKSGEAKKTEESGPST) the composition is skewed to basic and acidic residues.

In terms of assembly, interacts with the GTP-bound form of RAN1, RAN2 and RAN3. In terms of tissue distribution, ubiquitous. Preferentially expressed in root tips and gynoecium.

Its subcellular location is the nucleus. The protein localises to the nuclear pore complex. The protein is Ran-binding protein 1 homolog a (RANBP1A) of Arabidopsis thaliana (Mouse-ear cress).